We begin with the raw amino-acid sequence, 190 residues long: MARHVFLTGPPGVGKTTLIQKATEVLKSSGMPVDGFYTEEVRQGGRRIGFDVVTLSGIRGPLSRIGSEPLPGKRECRVGQYVVDLTSFEQLALPVLRNAGASGRPGQSICVIDEVGKMELFSQPFIQAVRQVLSIPGTVVLGTIPVPKGKPLALVEEIRTRKDVKVFSVTKENRNHLLPEIVTHMQSSRK.

The residue at position 2 (A2) is an N-acetylalanine. ATP contacts are provided by residues 9 to 16 (GPPGVGKT) and 109 to 116 (ICVIDEVG). The residue at position 165 (K165) is an N6-acetyllysine.

The protein belongs to the THEP1 NTPase family. Monomer.

The enzyme catalyses a ribonucleoside 5'-triphosphate + H2O = a ribonucleoside 5'-diphosphate + phosphate + H(+). It carries out the reaction 5-methyl-UTP + H2O = 5-methyl-UDP + phosphate + H(+). The catalysed reaction is CTP + H2O = CDP + phosphate + H(+). It catalyses the reaction ATP + H2O = ADP + phosphate + H(+). The enzyme catalyses GTP + H2O = GDP + phosphate + H(+). In terms of biological role, has nucleotide phosphatase activity towards ATP, GTP, CTP, TTP and UTP. Hydrolyzes nucleoside diphosphates with lower efficiency. This is Cancer-related nucleoside-triphosphatase homolog (NTPCR) from Bos taurus (Bovine).